A 445-amino-acid chain; its full sequence is Eukaryotic peptide chain release factor subunit 1 (445 aa).

Belongs to the eukaryotic release factor 1 family. Heterodimer of two subunits, one of which binds GTP.

It localises to the cytoplasm. Directs the termination of nascent peptide synthesis (translation) in response to the termination codon UGA. In Stylonchia UAA and UAG codes for glutamine. The sequence is that of Eukaryotic peptide chain release factor subunit 1 (ERF1) from Stylonychia lemnae (Ciliate).